The chain runs to 2710 residues: Serine/threonine-protein kinase ATR (2710 aa).

Positions 1647-2257 constitute an FAT domain; that stretch reads TLAKASFRCQ…LWMMAAVSKS (611 aa). The 313-residue stretch at 2368–2680 folds into the PI3K/PI4K catalytic domain; it reads IADDAEILNS…GVNAAPSLPL (313 aa). A G-loop region spans residues 2374–2380; the sequence is ILNSLQK. A catalytic loop region spans residues 2545-2553; it reads GLGDRHGEN. The activation loop stretch occupies residues 2565-2589; the sequence is HVDFSCLFDKGLLLEKPEVVPFRFT. Residues 2678–2710 form the FATC domain; the sequence is LPLSVEGQARRLIAEAVSHSNLGKMYVWWMAWF.

Belongs to the PI3/PI4-kinase family. ATM subfamily.

It localises to the nucleus. The catalysed reaction is L-seryl-[protein] + ATP = O-phospho-L-seryl-[protein] + ADP + H(+). It catalyses the reaction L-threonyl-[protein] + ATP = O-phospho-L-threonyl-[protein] + ADP + H(+). In terms of biological role, probable serine/threonine kinase. Seems to play a central role in cell-cycle regulation by transmitting DNA damage signals to downstream effectors of cell-cycle progression. May recognize the substrate consensus sequence [ST]-Q and phosphorylate histone variant H2AX to form H2AXS139ph at sites of DNA damage, thereby regulating DNA damage response mechanism. This is Serine/threonine-protein kinase ATR from Oryza sativa subsp. indica (Rice).